We begin with the raw amino-acid sequence, 622 residues long: Basic helix-loop-helix ARNT-like protein 2 (622 aa).

Positions 1 to 10 (MAEAGVGSAE) are enriched in low complexity. Disordered regions lie at residues 1–29 (MAEAGVGSAEGAEEERRAVEENFPVDGNS) and 41–86 (PITK…EDEE). The span at 45 to 54 (PATTSFNNSV) shows a compositional bias: polar residues. Acidic residues predominate over residues 67 to 76 (DNQDTVEVDG). A compositionally biased stretch (basic and acidic residues) spans 77 to 86 (DPQKRNEDEE). The bHLH domain maps to 92–145 (DFREAHSQTEKRRRDKMNNLIEELSAMIPQCNPMARKLDKLTVLRMAVQHLKSL). PAS domains lie at 163 to 235 (KDDE…DVSP) and 342 to 412 (VPQK…LQNK). Positions 417–460 (TNSYKFRAKDGSFITLKSQWFSFMNPWTKELEYIVSNNTVVLGH) constitute a PAC domain.

In terms of assembly, component of the circadian core oscillator, which includes the CRY proteins, CLOCK, or NPAS2, BMAL1 or BMAL2, CSNK1D and/or CSNK1E, TIMELESS and the PER proteins. Interacts directly with CLOCK to form the BMAL2-CLOCK transactivator. Can form heterodimers or homodimers which interact directly with CLOCK to form the transcription activator. In terms of tissue distribution, expressed in the pineal gland.

The protein localises to the nucleus. Its function is as follows. Transcriptional activator which forms a core component of the circadian clock. The circadian clock, an internal time-keeping system, regulates various physiological processes through the generation of approximately 24 hour circadian rhythms in gene expression, which are translated into rhythms in metabolism and behavior. It is derived from the Latin roots 'circa' (about) and 'diem' (day) and acts as an important regulator of a wide array of physiological functions including metabolism, sleep, body temperature, blood pressure, endocrine, immune, cardiovascular, and renal function. Consists of two major components: the central clock, residing in the suprachiasmatic nucleus (SCN) of the brain, and the peripheral clocks that are present in nearly every tissue and organ system. Both the central and peripheral clocks can be reset by environmental cues, also known as Zeitgebers (German for 'timegivers'). The predominant Zeitgeber for the central clock is light, which is sensed by retina and signals directly to the SCN. The central clock entrains the peripheral clocks through neuronal and hormonal signals, body temperature and feeding-related cues, aligning all clocks with the external light/dark cycle. Circadian rhythms allow an organism to achieve temporal homeostasis with its environment at the molecular level by regulating gene expression to create a peak of protein expression once every 24 hours to control when a particular physiological process is most active with respect to the solar day. Transcription and translation of core clock components (CLOCK, NPAS2, BMAL1, BMAL2, PER1, PER2, PER3, CRY1 and CRY2) plays a critical role in rhythm generation, whereas delays imposed by post-translational modifications (PTMs) are important for determining the period (tau) of the rhythms (tau refers to the period of a rhythm and is the length, in time, of one complete cycle). A diurnal rhythm is synchronized with the day/night cycle, while the ultradian and infradian rhythms have a period shorter and longer than 24 hours, respectively. Disruptions in the circadian rhythms contribute to the pathology of cardiovascular diseases, cancer, metabolic syndromes and aging. A transcription/translation feedback loop (TTFL) forms the core of the molecular circadian clock mechanism. Transcription factors, CLOCK or NPAS2 and BMAL1 or BMAL2, form the positive limb of the feedback loop, act in the form of a heterodimer and activate the transcription of core clock genes and clock-controlled genes (involved in key metabolic processes), harboring E-box elements (5'-CACGTG-3') within their promoters. The core clock genes: PER1/2/3 and CRY1/2 which are transcriptional repressors form the negative limb of the feedback loop and interact with the CLOCK|NPAS2-BMAL1|BMAL2 heterodimer inhibiting its activity and thereby negatively regulating their own expression. This heterodimer also activates nuclear receptors NR1D1/2 and RORA/B/G, which form a second feedback loop and which activate and repress BMAL1 transcription, respectively. The preferred binding motif for the CLOCK-BMAL1 heterodimer is 5'-CACGTGA-3', which contains a flanking adenine nucleotide at the 3-prime end of the canonical 6-nucleotide E-box sequence. CLOCK specifically binds to the half-site 5'-CAC-3', while BMAL1 binds to the half-site 5'-GTGA-3'. This is Basic helix-loop-helix ARNT-like protein 2 (BMAL2) from Gallus gallus (Chicken).